The following is a 346-amino-acid chain: Acetylserotonin O-methyltransferase (346 aa).

Residues Tyr-148, Trp-165, Asp-211, 236–238 (GDF), and Lys-253 contribute to the S-adenosyl-L-methionine site. The Proton donor/acceptor role is filled by His-256. Substrate is bound by residues Asp-257, Asn-303, and Gln-307.

This sequence belongs to the class I-like SAM-binding methyltransferase superfamily. Cation-independent O-methyltransferase family. In terms of assembly, homodimer. Expressed in pineal gland and retina.

The enzyme catalyses N-acetylserotonin + S-adenosyl-L-methionine = melatonin + S-adenosyl-L-homocysteine + H(+). Its pathway is aromatic compound metabolism; melatonin biosynthesis; melatonin from serotonin: step 1/2. In terms of biological role, catalyzes the transfer of a methyl group onto N-acetylserotonin, producing melatonin (N-acetyl-5-methoxytryptamine). The protein is Acetylserotonin O-methyltransferase (ASMT) of Gallus gallus (Chicken).